The chain runs to 175 residues: Bifunctional protein PyrR (175 aa).

The short motif at 97-109 (IVLIDDVLFTGRT) is the PRPP-binding element.

The protein belongs to the purine/pyrimidine phosphoribosyltransferase family. PyrR subfamily. As to quaternary structure, homodimer and homohexamer; in equilibrium.

It carries out the reaction UMP + diphosphate = 5-phospho-alpha-D-ribose 1-diphosphate + uracil. Regulates transcriptional attenuation of the pyrimidine nucleotide (pyr) operon by binding in a uridine-dependent manner to specific sites on pyr mRNA. This disrupts an antiterminator hairpin in the RNA and favors formation of a downstream transcription terminator, leading to a reduced expression of downstream genes. Functionally, also displays a weak uracil phosphoribosyltransferase activity which is not physiologically significant. The polypeptide is Bifunctional protein PyrR (Leuconostoc mesenteroides subsp. mesenteroides (strain ATCC 8293 / DSM 20343 / BCRC 11652 / CCM 1803 / JCM 6124 / NCDO 523 / NBRC 100496 / NCIMB 8023 / NCTC 12954 / NRRL B-1118 / 37Y)).